We begin with the raw amino-acid sequence, 207 residues long: Macrophage immunometabolism regulator (207 aa).

An N-acetylmethionine modification is found at Met-1. Residues 1 to 41 (MEVDVNGESRSALTTLPLPVAEASSPGKAEAEKPRCSSTPC) form a disordered region. A phosphoserine mark is found at Ser-25, Ser-140, and Ser-167.

This sequence belongs to the UNC119-binding protein family. As to quaternary structure, interacts with UNC119 and UNC119B; interaction preferentially takes place when UNC119 and UNC119B are unliganded with myristoylated proteins.

It localises to the cytoplasm. The protein localises to the cell projection. It is found in the cilium. Functionally, regulates the macrophage function, by enhancing the resolution of inflammation and wound repair functions mediated by M2 macrophages. The regulation of macrophage function is, due at least in part, to its ability to inhibit glycolysis. May play also a role in trafficking of proteins via its interaction with UNC119 and UNC119B cargo adapters: may help the release of UNC119 and UNC119B cargo or the recycling of UNC119 and UNC119B. May play a role in ciliary membrane localization via its interaction with UNC119B and protein transport into photoreceptor cells. The protein is Macrophage immunometabolism regulator (MACIR) of Bos taurus (Bovine).